A 520-amino-acid polypeptide reads, in one-letter code: MAPVNKSDKDRVIIFDTTLRDGEQCPGATMTFEEKLEVAELLDDMGVDVIEAGFPITSEGDFQAVSEIARRSKNAVIAGLSRAHPADIDRCAEAVKFAKRGRVHTVIATSPLHMRVKLNKTPEQVIETSVAMVARARNQIDDVEWSAEDGTRSEMDYLCRIVEAVIKAGATTVNIPDTVGYTVPEEYTHFMKTLIERVPNSDKAVFSVHCHNDLGMAVANSLAGVVGGARQVECTINGIGERAGNAALEEIVMAINVRNDKFPYWNKIDTTQLTRASKVVSAATSFPVQYNKAIVGRNAFAHESGIHQDGVLKDASTYEIMRPEMVGLKQSSLVLGKHSGRHAFVHKLEEMGYKLGPNQLEDAFTRMKALADRKKDIYDEDIEALVDEEMAASHDRIKLTSLTVIAGTHGPQRATMKLDVDGQIKIEEAEGNGPVDAVFNCIKRLVPHEAKLELYQVHAVTEGTDAQAEVSVRLSHDGRSMTARAADPDTLVASAKAYLGALNKIVMKRQRDTVTTAAAS.

The Pyruvate carboxyltransferase domain occupies 12–274 (VIIFDTTLRD…WNKIDTTQLT (263 aa)). Positions 21, 209, 211, and 245 each coordinate Mn(2+). The tract at residues 398–520 (KLTSLTVIAG…RDTVTTAAAS (123 aa)) is regulatory domain.

It belongs to the alpha-IPM synthase/homocitrate synthase family. LeuA type 1 subfamily. As to quaternary structure, homodimer. Requires Mn(2+) as cofactor.

Its subcellular location is the cytoplasm. It catalyses the reaction 3-methyl-2-oxobutanoate + acetyl-CoA + H2O = (2S)-2-isopropylmalate + CoA + H(+). It participates in amino-acid biosynthesis; L-leucine biosynthesis; L-leucine from 3-methyl-2-oxobutanoate: step 1/4. In terms of biological role, catalyzes the condensation of the acetyl group of acetyl-CoA with 3-methyl-2-oxobutanoate (2-ketoisovalerate) to form 3-carboxy-3-hydroxy-4-methylpentanoate (2-isopropylmalate). The protein is 2-isopropylmalate synthase of Bradyrhizobium diazoefficiens (strain JCM 10833 / BCRC 13528 / IAM 13628 / NBRC 14792 / USDA 110).